Reading from the N-terminus, the 372-residue chain is MAPAPPPAASFSPSEVQRRLAAGACWVRRGARLYDLSSFVRHHPGGEQLLRARAGQDISADLDGPPHRHSANARRWLEQYYVGELRGEQQGSMENEPVALEETQKTDPAMEPRFKVVDWDKDLVDWRKPLLWQVGHLGEKYDEWVHQPVTRPIRLFHSDLIEGLSKTVWYSVPIIWVPLVLYLSWSYYRTFAQGNVRLFTSFTTEYTVAVPKSMFPGLFMLGTFLWSLIEYLIHRFLFHMKPPSDSYYLIMLHFVMHGQHHKAPFDGSRLVFPPVPASLVIGVFYLCMQLILPEAVGGTVFAGGLLGYVLYDMTHYYLHFGSPHKGSYLYSLKAHHVKHHFAHQKSGFGISTKLWDYCFHTLTPEKPHLKTQ.

A Cytochrome b5 heme-binding domain is found at 8 to 86; the sequence is AASFSPSEVQ…LEQYYVGELR (79 aa). 2 residues coordinate heme: His43 and His69. A run of 2 helical transmembrane segments spans residues 168 to 188 and 213 to 233; these read VWYS…WSYY and SMFP…EYLI. Residues 219–361 enclose the Fatty acid hydroxylase domain; sequence FMLGTFLWSL…TKLWDYCFHT (143 aa). Zn(2+) is bound by residues His234, His239, His257, His260, and His261. 2 helical membrane passes run 268–288 and 290–310; these read SRLV…YLCM and LILP…GYVL. The Zn(2+) site is built by His315, His319, His336, His339, and His340.

Belongs to the sterol desaturase family. SCS7 subfamily. Zn(2+) serves as cofactor. Detected in differentiating cultured keratinocytes (at protein level). Detected in epidermis and cultured keratinocytes. Highly expressed in brain and colon. Detected at lower levels in testis, prostate, pancreas and kidney.

The protein localises to the endoplasmic reticulum membrane. It localises to the microsome membrane. The enzyme catalyses a 1,2-saturated fatty acid + 2 Fe(II)-[cytochrome b5] + O2 + 2 H(+) = a (R)-2-hydroxy fatty acid + 2 Fe(III)-[cytochrome b5] + H2O. The catalysed reaction is hexadecanoate + 2 Fe(II)-[cytochrome b5] + O2 + 2 H(+) = (R)-2-hydroxyhexadecanoate + 2 Fe(III)-[cytochrome b5] + H2O. It catalyses the reaction octadecanoate + 2 Fe(II)-[cytochrome b5] + O2 + 2 H(+) = (R)-2-hydroxyoctadecanoate + 2 Fe(III)-[cytochrome b5] + H2O. It carries out the reaction docosanoate + 2 Fe(II)-[cytochrome b5] + O2 + 2 H(+) = 2-hydroxydocosanoate + 2 Fe(III)-[cytochrome b5] + H2O. The enzyme catalyses tetracosanoate + 2 Fe(II)-[cytochrome b5] + O2 + 2 H(+) = (R)-2-hydroxytetracosanoate + 2 Fe(III)-[cytochrome b5] + H2O. It participates in lipid metabolism; fatty acid metabolism. Its pathway is sphingolipid metabolism; galactosylceramide biosynthesis. In terms of biological role, catalyzes the hydroxylation of free fatty acids at the C-2 position to produce 2-hydroxy fatty acids, which are building blocks of sphingolipids and glycosphingolipids common in neural tissue and epidermis. FA2H is stereospecific for the production of (R)-2-hydroxy fatty acids. Plays an essential role in the synthesis of galactosphingolipids of the myelin sheath. Responsible for the synthesis of sphingolipids and glycosphingolipids involved in the formation of epidermal lamellar bodies critical for skin permeability barrier. Participates in the synthesis of glycosphingolipids and a fraction of type II wax diesters in sebaceous gland, specifically regulating hair follicle homeostasis. Involved in the synthesis of sphingolipids of plasma membrane rafts, controlling lipid raft mobility and trafficking of raft-associated proteins. The chain is Fatty acid 2-hydroxylase from Homo sapiens (Human).